Consider the following 466-residue polypeptide: 3-isopropylmalate dehydratase large subunit (466 aa).

[4Fe-4S] cluster contacts are provided by cysteine 347, cysteine 407, and cysteine 410.

It belongs to the aconitase/IPM isomerase family. LeuC type 1 subfamily. As to quaternary structure, heterodimer of LeuC and LeuD. [4Fe-4S] cluster serves as cofactor.

It catalyses the reaction (2R,3S)-3-isopropylmalate = (2S)-2-isopropylmalate. The protein operates within amino-acid biosynthesis; L-leucine biosynthesis; L-leucine from 3-methyl-2-oxobutanoate: step 2/4. Functionally, catalyzes the isomerization between 2-isopropylmalate and 3-isopropylmalate, via the formation of 2-isopropylmaleate. The chain is 3-isopropylmalate dehydratase large subunit from Salmonella paratyphi A (strain ATCC 9150 / SARB42).